The primary structure comprises 445 residues: MTAASSLHPPAIPRVGFVSLGCPKATVDSERILTCLRAEGYLISPNYADADLVVVNTCGFIDSAVAESLETIGEALTENGKVIVTGCLGAKEDVIRQAHPSVLAVTGPQATEEVMAAIHHHLPKPHDPYLDLVPPQGIKLTPKHYAYLKISEGCNHHCTFCIIPSMRGDLVSRPVGGVLQEAQSLVEAGVKELLIISQDTSAYGVDIKYRTGFWQGRPVRTRITELANALGEFGIWVRLHYVYPYPHVDELIPLMAEGKLLPYLDIPFQHANKRILKLMKRPANSENVLVRIQQWRKTCPDIALRSTFIVGFPGETEAEFEELLAFLEEAQLDRVGAFTYSPVKGAAANVLPDHVPPEIQQERLERLMQQQEIISKQRLAVKKGQQLRVLVDTVDEEGAIARSYADAPEIDGVVYINDASTLKPGDWADVRVTDTDIHDLWTEKI.

The MTTase N-terminal domain occupies 13–123 (PRVGFVSLGC…VMAAIHHHLP (111 aa)). Cys22, Cys58, Cys87, Cys154, Cys158, and Cys161 together coordinate [4Fe-4S] cluster. Positions 140–377 (LTPKHYAYLK…MQQQEIISKQ (238 aa)) constitute a Radical SAM core domain. A TRAM domain is found at 380-445 (AVKKGQQLRV…DIHDLWTEKI (66 aa)).

It belongs to the methylthiotransferase family. RimO subfamily. Requires [4Fe-4S] cluster as cofactor.

The protein resides in the cytoplasm. The catalysed reaction is L-aspartate(89)-[ribosomal protein uS12]-hydrogen + (sulfur carrier)-SH + AH2 + 2 S-adenosyl-L-methionine = 3-methylsulfanyl-L-aspartate(89)-[ribosomal protein uS12]-hydrogen + (sulfur carrier)-H + 5'-deoxyadenosine + L-methionine + A + S-adenosyl-L-homocysteine + 2 H(+). Catalyzes the methylthiolation of an aspartic acid residue of ribosomal protein uS12. The chain is Ribosomal protein uS12 methylthiotransferase RimO from Nitrosomonas eutropha (strain DSM 101675 / C91 / Nm57).